The sequence spans 1320 residues: Junctional cadherin 5-associated protein (1320 aa).

Disordered stretches follow at residues 1–124, 183–202, 209–233, 252–426, 452–492, 676–720, 741–802, and 835–942; these read MYSV…GSGS, KKPR…KRPQ, YPFV…ALSP, GVPK…SIQY, DDTS…NEQS, ASSP…PTPT, NQKP…STTG, and ELQE…QKSQ. Composition is skewed to polar residues over residues 58–71 and 95–107; these read RTSL…NSEN and NQPS…QPQS. Residues 108-119 show a composition bias toward basic and acidic residues; it reads GRDDIYWSRGRQ. A compositionally biased stretch (pro residues) spans 255 to 267; sequence KVPPYPPSFPSPS. Over residues 308–329 the composition is skewed to basic and acidic residues; it reads FQDHQHRDPRGSYPTRSKDPSH. Residues 338 to 356 are compositionally biased toward pro residues; that stretch reads LEPPVYVPPPSYRSPPQHI. A compositionally biased stretch (polar residues) spans 369–378; sequence VSSNQSQQQV. Residues 404 to 415 show a composition bias toward pro residues; the sequence is GSPPQGLPPQPY. A compositionally biased stretch (polar residues) spans 454-465; it reads TSYNPGLLTTQE. Threonine 484 carries the phosphothreonine modification. At serine 486 the chain carries Phosphoserine. A compositionally biased stretch (polar residues) spans 741-782; it reads NQKPSVPHLQGQTSLSPSRNSAFSRTSSAINQASMSKGTSDQ. Over residues 849-859 the composition is skewed to acidic residues; it reads EDSEAEQPEDC. Serine 851 bears the Phosphoserine mark. Residues 865–877 show a composition bias toward polar residues; the sequence is KSWALQGTRTAQQ. Phosphoserine occurs at positions 1027 and 1033. Disordered regions lie at residues 1085 to 1116 and 1153 to 1174; these read ARRT…SLAL and SDVD…KDEE. Phosphoserine is present on residues serine 1245 and serine 1248. Residues 1275–1320 form a disordered region; sequence DEAWQAGHLPSVSQNENGHPEVPRDKMSDQDLWCADSYDPSRVERV. A compositionally biased stretch (basic and acidic residues) spans 1292-1303; sequence GHPEVPRDKMSD.

It localises to the cell junction. Its subcellular location is the adherens junction. The sequence is that of Junctional cadherin 5-associated protein from Mus musculus (Mouse).